The primary structure comprises 124 residues: Small ribosomal subunit protein uS12 (124 aa).

The segment at Met-1 to Pro-22 is disordered. At Asp-89 the chain carries 3-methylthioaspartic acid. A disordered region spans residues Thr-104–Ser-124. Residues Gly-113 to Ser-124 are compositionally biased toward basic residues.

Belongs to the universal ribosomal protein uS12 family. Part of the 30S ribosomal subunit. Contacts proteins S8 and S17. May interact with IF1 in the 30S initiation complex.

Functionally, with S4 and S5 plays an important role in translational accuracy. Its function is as follows. Interacts with and stabilizes bases of the 16S rRNA that are involved in tRNA selection in the A site and with the mRNA backbone. Located at the interface of the 30S and 50S subunits, it traverses the body of the 30S subunit contacting proteins on the other side and probably holding the rRNA structure together. The combined cluster of proteins S8, S12 and S17 appears to hold together the shoulder and platform of the 30S subunit. This is Small ribosomal subunit protein uS12 from Hahella chejuensis (strain KCTC 2396).